We begin with the raw amino-acid sequence, 209 residues long: ATP-dependent Clp protease proteolytic subunit (209 aa).

Ser-107 functions as the Nucleophile in the catalytic mechanism. His-132 is a catalytic residue.

It belongs to the peptidase S14 family. Fourteen ClpP subunits assemble into 2 heptameric rings which stack back to back to give a disk-like structure with a central cavity, resembling the structure of eukaryotic proteasomes.

It is found in the cytoplasm. The enzyme catalyses Hydrolysis of proteins to small peptides in the presence of ATP and magnesium. alpha-casein is the usual test substrate. In the absence of ATP, only oligopeptides shorter than five residues are hydrolyzed (such as succinyl-Leu-Tyr-|-NHMec, and Leu-Tyr-Leu-|-Tyr-Trp, in which cleavage of the -Tyr-|-Leu- and -Tyr-|-Trp bonds also occurs).. Cleaves peptides in various proteins in a process that requires ATP hydrolysis. Has a chymotrypsin-like activity. Plays a major role in the degradation of misfolded proteins. The polypeptide is ATP-dependent Clp protease proteolytic subunit (Methylobacterium nodulans (strain LMG 21967 / CNCM I-2342 / ORS 2060)).